The chain runs to 501 residues: DEAD-box ATP-dependent RNA helicase 20 (501 aa).

Composition is skewed to basic and acidic residues over residues 1–20 (MSRY…RRSD) and 38–53 (SKKD…KLDL). The tract at residues 1–53 (MSRYDSRTGDSTSYRDRRSDSGFGGTSSYGSSGSHTSSKKDNDGNESPRKLDL) is disordered. The short motif at 99 to 127 (KSFRDVGFPDYVLEEVKKAGFTEPTPIQS) is the Q motif element. A Helicase ATP-binding domain is found at 130–305 (WPMAMKGRDL…KKFLYNPYKV (176 aa)). 143-150 (AETGSGKT) is a binding site for ATP. Positions 253 to 256 (DEAD) match the DEAD box motif. The Helicase C-terminal domain occupies 333–478 (KLVKLLEDIM…KVSPELASMG (146 aa)). The interval 473-501 (ELASMGRSTAPPPPGLGGFRDRGSRRGWS) is disordered. Residues 491-501 (FRDRGSRRGWS) show a composition bias toward basic and acidic residues.

Belongs to the DEAD box helicase family. DDX5/DBP2 subfamily.

It localises to the nucleus. The enzyme catalyses ATP + H2O = ADP + phosphate + H(+). ATP-dependent RNA helicase involved nonsense-mediated mRNA decay and ribosome biogenesis through rRNA processing. This Arabidopsis thaliana (Mouse-ear cress) protein is DEAD-box ATP-dependent RNA helicase 20 (RH20).